The primary structure comprises 1159 residues: Anillin-like protein 1 (1159 aa).

Disordered regions lie at residues 43-81 (VASP…MKEN), 266-327 (QQVS…TKTT), 409-430 (KLKK…APVP), 549-608 (AIPK…GDVI), and 629-699 (FGFM…KSSS). The segment covering 50–60 (FGSSSKCNDGP) has biased composition (polar residues). Positions 287-327 (ASSATSSSSSTTTLTTISGASGSTTSGISNAPQDSASTKTT) are enriched in low complexity. Pro residues predominate over residues 421–430 (PPAPTSAPVP). Residues 564–584 (SASSLYSQGARSNTASPASKS) are compositionally biased toward polar residues. A compositionally biased stretch (acidic residues) spans 660 to 684 (VIEEETENEDESEPYEPEEEEDDDA). The 119-residue stretch at 1029–1147 (DITYHGFLSM…WLSLINSTSK (119 aa)) folds into the PH domain.

As to expression, strongly expressed in dividing neuroblasts under the ventral epidermal cells during ventral enclosure.

The protein resides in the cytoplasm. Its subcellular location is the cell cortex. It localises to the cytoskeleton. It is found in the spindle. The protein localises to the midbody. The protein resides in the cleavage furrow. In terms of biological role, required for contractile events in embryos that occur prior to mitosis, such as cortical ruffling and pseudocleavage. Promotes membrane ruffling by organizing cortical patches of septins and myosin II. Not generally required for cytokinesis in mitotic cells. Required for the asymmetric cleavage events that extrude the two polar bodies during oocyte meiosis. Not required for meiotic contractile ring assembly, initiation or closure but is required for the transformation of the contractile ring from a disk above the spindle to a tube around the spindle midzone. Promotes astral microtubule-directed cortical myosin polarization and cleavage furrow ingression. Regulates neuroblast cytokinesis during mid- to late-embryogenesis and is required for ventral enclosure. This is Anillin-like protein 1 (ani-1) from Caenorhabditis elegans.